A 126-amino-acid chain; its full sequence is S-adenosylmethionine decarboxylase proenzyme (126 aa).

The Schiff-base intermediate with substrate; via pyruvic acid role is filled by Ser63. Ser63 carries the pyruvic acid (Ser); by autocatalysis modification. The active-site Proton acceptor; for processing activity is the His68. Residue Cys83 is the Proton donor; for catalytic activity of the active site.

The protein belongs to the prokaryotic AdoMetDC family. Type 1 subfamily. Heterotetramer of two alpha and two beta chains arranged as a dimer of alpha/beta heterodimers. Pyruvate serves as cofactor. Is synthesized initially as an inactive proenzyme. Formation of the active enzyme involves a self-maturation process in which the active site pyruvoyl group is generated from an internal serine residue via an autocatalytic post-translational modification. Two non-identical subunits are generated from the proenzyme in this reaction, and the pyruvate is formed at the N-terminus of the alpha chain, which is derived from the carboxyl end of the proenzyme. The post-translation cleavage follows an unusual pathway, termed non-hydrolytic serinolysis, in which the side chain hydroxyl group of the serine supplies its oxygen atom to form the C-terminus of the beta chain, while the remainder of the serine residue undergoes an oxidative deamination to produce ammonia and the pyruvoyl group blocking the N-terminus of the alpha chain.

The catalysed reaction is S-adenosyl-L-methionine + H(+) = S-adenosyl 3-(methylsulfanyl)propylamine + CO2. Its pathway is amine and polyamine biosynthesis; S-adenosylmethioninamine biosynthesis; S-adenosylmethioninamine from S-adenosyl-L-methionine: step 1/1. Catalyzes the decarboxylation of S-adenosylmethionine to S-adenosylmethioninamine (dcAdoMet), the propylamine donor required for the synthesis of the polyamines spermine and spermidine from the diamine putrescine. The chain is S-adenosylmethionine decarboxylase proenzyme from Oceanobacillus iheyensis (strain DSM 14371 / CIP 107618 / JCM 11309 / KCTC 3954 / HTE831).